The sequence spans 178 residues: Large ribosomal subunit protein uL10 (178 aa).

Belongs to the universal ribosomal protein uL10 family. In terms of assembly, part of the ribosomal stalk of the 50S ribosomal subunit. The N-terminus interacts with L11 and the large rRNA to form the base of the stalk. The C-terminus forms an elongated spine to which L12 dimers bind in a sequential fashion forming a multimeric L10(L12)X complex.

Its function is as follows. Forms part of the ribosomal stalk, playing a central role in the interaction of the ribosome with GTP-bound translation factors. This chain is Large ribosomal subunit protein uL10, found in Dictyoglomus turgidum (strain DSM 6724 / Z-1310).